We begin with the raw amino-acid sequence, 213 residues long: uncharacterized protein (213 aa).

Over residues 1–11 (MFATKDPEFEN) the composition is skewed to basic and acidic residues. Disordered stretches follow at residues 1 to 21 (MFAT…SPRN) and 63 to 98 (LRNK…EQAW). A compositionally biased stretch (polar residues) spans 12-21 (RINTNKSPRN). Positions 63–93 (LRNKAPKNEETKHEEHTPDNHEETDHHEAKQ) are enriched in basic and acidic residues.

This is an uncharacterized protein from Escherichia coli (strain K12).